The primary structure comprises 203 residues: Small ribosomal subunit protein uS4 (203 aa).

The S4 RNA-binding domain maps to 93–173; the sequence is RRLDNVVFRS…FPSWIQVDKA (81 aa).

This sequence belongs to the universal ribosomal protein uS4 family. In terms of assembly, part of the 30S ribosomal subunit. Contacts protein S5. The interaction surface between S4 and S5 is involved in control of translational fidelity.

Functionally, one of the primary rRNA binding proteins, it binds directly to 16S rRNA where it nucleates assembly of the body of the 30S subunit. With S5 and S12 plays an important role in translational accuracy. This Chlorobium limicola (strain DSM 245 / NBRC 103803 / 6330) protein is Small ribosomal subunit protein uS4.